The primary structure comprises 682 residues: Serine/threonine-protein kinase PLK2 (682 aa).

The tract at residues 25 to 67 is disordered; it reads ACGGDSKKKRPQQPSEDGQPQAQVTPAAPHHHHHHSHSGPEIS. Over residues 36–48 the composition is skewed to polar residues; sequence QQPSEDGQPQAQV. The 253-residue stretch at 79-331 folds into the Protein kinase domain; that stretch reads YCRGKVLGKG…LDDIIRHDFF (253 aa). Residues 85–93 and Lys108 contribute to the ATP site; that span reads LGKGGFAKC. Asp202 functions as the Proton acceptor in the catalytic mechanism. A Phosphothreonine modification is found at Thr236. Residues 403-432 are disordered; sequence SITQQPSKHRADEEPQPPPTTVARSGTSAV. POLO box domains lie at 500–578 and 598–682; these read WVTK…YMEE and YLLQ…QRCN.

The protein belongs to the protein kinase superfamily. Ser/Thr protein kinase family. CDC5/Polo subfamily. In terms of assembly, interacts with NSF; causing NSF dissociation from GRIA2. Interacts with CIB1. In terms of processing, catalytic activity is enhanced by phosphorylation of Thr-236. In terms of tissue distribution, brain, lung and heart.

The protein localises to the cytoplasm. It is found in the cytoskeleton. The protein resides in the microtubule organizing center. Its subcellular location is the centrosome. It localises to the centriole. The protein localises to the cell projection. It is found in the dendrite. It carries out the reaction L-seryl-[protein] + ATP = O-phospho-L-seryl-[protein] + ADP + H(+). It catalyses the reaction L-threonyl-[protein] + ATP = O-phospho-L-threonyl-[protein] + ADP + H(+). Its activity is regulated as follows. Activated by phosphorylation of Thr-236. Once activated, activity is stimulated by binding target proteins. Its function is as follows. Tumor suppressor serine/threonine-protein kinase involved in synaptic plasticity, centriole duplication and G1/S phase transition. Polo-like kinases act by binding and phosphorylating proteins that are already phosphorylated on a specific motif recognized by the POLO box domains. Phosphorylates CPAP, NPM1, RAPGEF2, RASGRF1, SNCA, SIPA1L1 and SYNGAP1. Plays a key role in synaptic plasticity and memory by regulating the Ras and Rap protein signaling: required for overactivity-dependent spine remodeling by phosphorylating the Ras activator RASGRF1 and the Rap inhibitor SIPA1L1 leading to their degradation by the proteasome. Conversely, phosphorylates the Rap activator RAPGEF2 and the Ras inhibitor SYNGAP1, promoting their activity. Also regulates synaptic plasticity independently of kinase activity, via its interaction with NSF that disrupts the interaction between NSF and the GRIA2 subunit of AMPARs, leading to a rapid rundown of AMPAR-mediated current that occludes long term depression. Required for procentriole formation and centriole duplication by phosphorylating CPAP and NPM1, respectively. Its induction by p53/TP53 suggests that it may participate in the mitotic checkpoint following stress. In Mus musculus (Mouse), this protein is Serine/threonine-protein kinase PLK2 (Plk2).